An 837-amino-acid polypeptide reads, in one-letter code: Protein translocase subunit SecA 1 (837 aa).

Residues Gln-85, 103-107 (GEGKT), and Asp-493 each bind ATP. The Zn(2+) site is built by Cys-821, Cys-823, Cys-832, and His-833.

This sequence belongs to the SecA family. In terms of assembly, monomer and homodimer. Part of the essential Sec protein translocation apparatus which comprises SecA, SecYEG and auxiliary proteins SecDF. Other proteins may also be involved. Requires Zn(2+) as cofactor.

The protein resides in the cell membrane. It is found in the cytoplasm. The catalysed reaction is ATP + H2O + cellular proteinSide 1 = ADP + phosphate + cellular proteinSide 2.. Part of the Sec protein translocase complex. Interacts with the SecYEG preprotein conducting channel. Has a central role in coupling the hydrolysis of ATP to the transfer of proteins into and across the cell membrane, serving as an ATP-driven molecular motor driving the stepwise translocation of polypeptide chains across the membrane. This chain is Protein translocase subunit SecA 1, found in Streptococcus pneumoniae serotype 4 (strain ATCC BAA-334 / TIGR4).